We begin with the raw amino-acid sequence, 465 residues long: Cysteine--tRNA ligase (465 aa).

C29 lines the Zn(2+) pocket. A 'HIGH' region motif is present at residues 31 to 41; it reads PTVYNYIHIGN. The Zn(2+) site is built by C209, H234, and E238. The 'KMSKS' region signature appears at 266–270; the sequence is KMSKS. K269 is an ATP binding site. S270 is modified (phosphoserine).

Belongs to the class-I aminoacyl-tRNA synthetase family. In terms of assembly, monomer. Zn(2+) serves as cofactor.

It is found in the cytoplasm. The catalysed reaction is tRNA(Cys) + L-cysteine + ATP = L-cysteinyl-tRNA(Cys) + AMP + diphosphate. The polypeptide is Cysteine--tRNA ligase (Bacillus cereus (strain B4264)).